The sequence spans 739 residues: Double-strand break repair protein mus-23 (739 aa).

Mn(2+) is bound by residues Asp16, His18, Asp56, and Asn123. Catalysis depends on His124, which acts as the Proton donor. 3 residues coordinate Mn(2+): His212, His240, and His242. A disordered region spans residues 516–739 (FDAGQHKQAQ…KPGLLARRLG (224 aa)). Residues 523 to 532 (QAQRTKRFKR) are compositionally biased toward basic residues. Residues 559-568 (VEPKGNDRPT) are compositionally biased toward basic and acidic residues. Residues 599 to 636 (KRGAAAKTTAAAKKAAPGKKAAPAKKAAPAKKAAPAKK) show a composition bias toward low complexity. Residues 637 to 646 (APARGRKKKT) show a composition bias toward basic residues. Acidic residues predominate over residues 650 to 686 (DSDEEEEEDYPEDDDEEEEEADEEEEDVIMEDDEEDP). Residues 694–722 (KATSRVASTRASARATPVRATPARATQAR) are compositionally biased toward low complexity.

The protein belongs to the MRE11/RAD32 family. As to quaternary structure, component of the MRN complex composed of two heterodimers RAD50 and MRE11 associated with a single NBS1. Mn(2+) is required as a cofactor.

Its subcellular location is the nucleus. The protein localises to the chromosome. The protein resides in the telomere. Core component of the MRN complex, which plays a central role in double-strand break (DSB) repair, DNA recombination, maintenance of telomere integrity and meiosis. The MRN complex is involved in the repair of DNA double-strand breaks (DSBs) via homologous recombination (HR), an error-free mechanism which primarily occurs during S and G2 phases. The complex (1) mediates the end resection of damaged DNA, which generates proper single-stranded DNA, a key initial steps in HR, and is (2) required for the recruitment of other repair factors and efficient activation of ATM and ATR upon DNA damage. Within the MRN complex, MRE11 possesses both single-strand endonuclease activity and double-strand-specific 3'-5' exonuclease activity. MRE11 first endonucleolytically cleaves the 5' strand at DNA DSB ends to prevent non-homologous end joining (NHEJ) and licence HR. It then generates a single-stranded DNA gap via 3' to 5' exonucleolytic degradation, which is required for single-strand invasion and recombination. The MRN complex is also required for the processing of R-loops. The protein is Double-strand break repair protein mus-23 (mus-23) of Neurospora crassa (strain ATCC 24698 / 74-OR23-1A / CBS 708.71 / DSM 1257 / FGSC 987).